Consider the following 387-residue polypeptide: Putative acid--amine ligase YjfC (387 aa).

101-103 lines the ATP pocket; sequence RMD. Mg(2+) is bound by residues D103, E116, and N118. Residues K265, K302, G309, Q337, and 372–374 each bind ATP; that span reads LIT.

It belongs to the glutathionylspermidine synthase preATP-grasp family.

In terms of biological role, may be a ligase forming an amide bond. Shows ATPase activity. Despite its similarity to the C-terminal synthetase domain of Gss, is not a glutathionylspermidine (Gsp) synthetase. Cannot synthesize Gsp, glutathione (GSH), or GSH intermediates, from GSH and spermidine, cysteine and glutamate, gamma-glutamylcysteine and spermidine, and gamma-glutamylcysteine and glycine. Does not bind to Gsp. This is Putative acid--amine ligase YjfC (yjfC) from Escherichia coli (strain K12).